Consider the following 1258-residue polypeptide: Structural polyprotein (1258 aa).

The interval 41–75 (PQAQQMQQLIAAVNTLAIRQNGTRTPGQQRRKRQP) is host transcription inhibition. Positions 59–114 (RQNGTRTPGQQRRKRQPNKPKRKQTPPKKQNPAKTKNKQKPQPPKPKKRKPGKRER) are disordered. The Nuclear localization signal signature appears at 68–109 (QQRRKRQPNKPKRKQTPPKKQNPAKTKNKQKPQPPKPKKRKP). Basic residues-rich tracts occupy residues 69-84 (QRRK…KQTP) and 93-114 (TKNK…KRER). The segment at 96 to 124 (KQKPQPPKPKKRKPGKRERKCMKIENDCI) is binding to the viral RNA. The ribosome-binding stretch occupies residues 109-123 (PGKRERKCMKIENDC). A disulfide bridge links cysteine 123 with cysteine 138. The 149-residue stretch at 123 to 271 (CIFEVKLEGK…RITPEGTEEW (149 aa)) folds into the Peptidase S3 domain. Catalysis depends on histidine 149, which acts as the Charge relay system. Residues 154-164 (IDNPDLAKLAF) carry the Nuclear export signal motif. Residues 165–170 (KKSSKY) form an interaction with spike glycoprotein E2 region. The Charge relay system role is filled by aspartate 171. A dimerization of the capsid protein region spans residues 193 to 203 (PEGHYNWHHGA). Serine 223 functions as the Charge relay system in the catalytic mechanism. The dimerization of the capsid protein stretch occupies residues 229–233 (DNKGR). The interval 272 to 284 (TALVTTACILSNL) is functions as an uncleaved signal peptide for the precursor of protein E3/E2. Intrachain disulfides connect cysteine 279–cysteine 288, cysteine 293–cysteine 297, cysteine 296–cysteine 328, cysteine 356–cysteine 462, cysteine 359–cysteine 365, cysteine 428–cysteine 442, cysteine 490–cysteine 601, cysteine 538–cysteine 562, and cysteine 540–cysteine 557. A glycan (N-linked (GlcNAc...) asparagine; by host) is linked at asparagine 283. At 338 to 696 (GLTEDYKAYK…PHEIFSYYYG (359 aa)) the chain is on the extracellular side. Interaction with host Mxra8 receptor stretches follow at residues 363 to 366 (QFCY) and 399 to 401 (HSW). The tract at residues 521–524 (TGNK) is interaction with host Mxra8 receptor. N-linked (GlcNAc...) asparagine; by host glycosylation occurs at asparagine 537. The interaction with host Mxra8 receptor stretch occupies residues 553-559 (EFDNCEV). Residue asparagine 598 is glycosylated (N-linked (GlcNAc...) asparagine; by host). Residues 697 to 717 (LYPATTVAVCVGLACVILLAL) traverse the membrane as a helical segment. Over 718–758 (SASCCLCVSARNKCLTPYALTPGAVVPCTLSLLCCAPRAKA) the chain is Cytoplasmic. Positions 726–730 (SARNK) are interaction with the capsid protein. S-palmitoyl cysteine; by host attachment occurs at residues cysteine 731, cysteine 751, and cysteine 752. The interval 731 to 751 (CLTPYALTPGAVVPCTLSLLC) is transient transmembrane before p62-6K protein processing. An intrachain disulfide couples cysteine 731 to cysteine 752. Residues 759 to 773 (ATFAETAAYLWAENQ) are Extracellular-facing. Residues 774–794 (TVFWMQFAIPVACFMIVTYCL) traverse the membrane as a helical segment. Residues 795–796 (RH) lie on the Cytoplasmic side of the membrane. The chain crosses the membrane as a helical span at residues 797–817 (LMLCCRTASFLVAVSLGMGAT). Extracellular-side segments run 818 to 819 (QA) and 820 to 1234 (YEHS…HTMG). Intrachain disulfides connect cysteine 868/cysteine 933, cysteine 881/cysteine 913, cysteine 882/cysteine 915, and cysteine 887/cysteine 897. Residues 903 to 920 (VYPFLWGGAYCFCDSENT) form an E1 fusion peptide loop region. Asparagine 960 and asparagine 1089 each carry an N-linked (GlcNAc...) asparagine; by host glycan. Cystine bridges form between cysteine 1078-cysteine 1090, cysteine 1120-cysteine 1195, cysteine 1125-cysteine 1199, and cysteine 1147-cysteine 1189. Residues 1235–1255 (GATVVIAIGITIFLIVTCIAF) form a helical membrane-spanning segment. Residue cysteine 1252 is the site of S-palmitoyl cysteine; by host attachment. The Cytoplasmic segment spans residues 1256–1258 (SRH).

Homodimer. Homomultimer. Interacts with host karyopherin KPNA4; this interaction allows the nuclear import of the viral capsid protein. Interacts with spike glycoprotein E2. Interacts with host IRAK1; the interaction leads to inhibition of IRAK1-dependent signaling. In terms of assembly, the precursor of protein E3/E2 and E1 form a heterodimer shortly after synthesis. As to quaternary structure, the precursor of protein E3/E2 and E1 form a heterodimer shortly after synthesis. Processing of the precursor of protein E3/E2 into E2 and E3 results in a heterodimer of the spike glycoproteins E2 and E1. Spike at virion surface are constituted of a trimer of E2-E1 heterodimers. After target cell attachment and endocytosis, E1 change conformation to form homotrimers. Interacts with 6K protein. Interacts with spike glycoprotein E1. Processing of the precursor of protein E3/E2 into E2 and E3 results in a heterodimer of the spike glycoproteins E2 and E1. Spike at virion surface are constituted of a trimer of E2-E1 heterodimers. Interacts with 6K protein. Interacts with host MXRA8; this interaction mediates virus entry. In terms of assembly, oligomer. Interacts with spike glycoprotein E1. Interacts with spike glycoprotein E2. Structural polyprotein: Specific enzymatic cleavages in vivo yield mature proteins. Capsid protein is auto-cleaved during polyprotein translation, unmasking a signal peptide at the N-terminus of the precursor of E3/E2. The remaining polyprotein is then targeted to the host endoplasmic reticulum, where host signal peptidase cleaves it into pE2, 6K and E1 proteins. pE2 is further processed to mature E3 and E2 by host furin in trans-Golgi vesicle. In terms of processing, palmitoylated via thioester bonds. These palmitoylations may induce disruption of the C-terminus transmembrane. This would result in the reorientation of E2 C-terminus from lumenal to cytoplasmic side. Post-translationally, N-glycosylated. Palmitoylated via thioester bonds.

The protein localises to the virion. The protein resides in the host cytoplasm. It localises to the host cell membrane. Its subcellular location is the host nucleus. It is found in the virion membrane. The protein localises to the host Golgi apparatus. The protein resides in the host trans-Golgi network. It localises to the host endoplasmic reticulum. It catalyses the reaction Autocatalytic release of the core protein from the N-terminus of the togavirus structural polyprotein by hydrolysis of a -Trp-|-Ser- bond.. In terms of biological role, forms an icosahedral capsid with a T=4 symmetry composed of 240 copies of the capsid protein surrounded by a lipid membrane through which penetrate 80 spikes composed of trimers of E1-E2 heterodimers. The capsid protein binds to the viral RNA genome at a site adjacent to a ribosome binding site for viral genome translation following genome release. Possesses a protease activity that results in its autocatalytic cleavage from the nascent structural protein. Following its self-cleavage, the capsid protein transiently associates with ribosomes, and within several minutes the protein binds to viral RNA and rapidly assembles into icosahedric core particles. The resulting nucleocapsid eventually associates with the cytoplasmic domain of the spike glycoprotein E2 at the cell membrane, leading to budding and formation of mature virions. In case of infection, new virions attach to target cells and after clathrin-mediated endocytosis their membrane fuses with the host endosomal membrane. This leads to the release of the nucleocapsid into the cytoplasm, followed by an uncoating event necessary for the genomic RNA to become accessible. The uncoating might be triggered by the interaction of capsid proteins with ribosomes. Binding of ribosomes would release the genomic RNA since the same region is genomic RNA-binding and ribosome-binding. Specifically inhibits interleukin-1 receptor-associated kinase 1/IRAK1-dependent signaling during viral entry, representing a means by which the alphaviruses may evade innate immune detection and activation prior to viral gene expression. Provides the signal sequence for the translocation of the precursor of protein E3/E2 to the host endoplasmic reticulum. Furin-cleaved E3 remains associated with spike glycoprotein E1 and mediates pH protection of the latter during the transport via the secretory pathway. After virion release from the host cell, the assembly protein E3 is gradually released in the extracellular space. Functionally, plays a role in viral attachment to target host cell, by binding to the cell receptor MXRA8. Synthesized as a p62 precursor which is processed by furin at the cell membrane just before virion budding, giving rise to E2-E1 heterodimer. The p62-E1 heterodimer is stable, whereas E2-E1 is unstable and dissociate at low pH. p62 is processed at the last step, presumably to avoid E1 fusion activation before its final export to cell surface. E2 C-terminus contains a transitory transmembrane that would be disrupted by palmitoylation, resulting in reorientation of the C-terminal tail from lumenal to cytoplasmic side. This step is critical since E2 C-terminus is involved in budding by interacting with capsid proteins. This release of E2 C-terminus in cytoplasm occurs lately in protein export, and precludes premature assembly of particles at the endoplasmic reticulum membrane. Its function is as follows. Acts as a viroporin that participates in virus glycoprotein processing and transport to the plasma membrane, cell permeabilization and budding of viral particles. Disrupts the calcium homeostasis of the cell, probably at the endoplasmic reticulum level. This leads to cytoplasmic calcium elevation. Because of its lipophilic properties, the 6K protein is postulated to influence the selection of lipids that interact with the transmembrane domains of the glycoproteins, which, in turn, affects the deformability of the bilayer required for the extreme curvature that occurs as budding proceeds. Present in low amount in virions, about 3% compared to viral glycoproteins. In terms of biological role, class II viral fusion protein. Fusion activity is inactive as long as E1 is bound to E2 in mature virion. After virus attachment to target cell and endocytosis, acidification of the endosome induce dissociation of E1/E2 heterodimer and concomitant trimerization of the E1 subunits. This E1 trimer is fusion active, and promotes release of viral nucleocapsid in cytoplasm after endosome and viral membrane fusion. Efficient fusion requires the presence of cholesterol and sphingolipid in the target membrane. This Middelburg virus protein is Structural polyprotein.